The sequence spans 730 residues: Stonin-1 (730 aa).

3 disordered regions span residues 1–26 (MYST…KRKD), 38–83 (NGLK…PLST), and 132–159 (SPHV…AGPQ). 2 stretches are compositionally biased toward low complexity: residues 54 to 65 (PSSASSTPLSSP) and 132 to 143 (SPHVSLPSSHSH). Residues 269 to 402 (GWSFMLRIPE…KLPATAKPKN (134 aa)) enclose the SHD domain. The MHD domain maps to 407 to 710 (EQEICLDIQD…ACYNIQVEIE (304 aa)).

The protein belongs to the Stoned B family.

It localises to the cytoplasm. It is found in the membrane. May be involved in the endocytic machinery. This is Stonin-1 (Ston1) from Mus musculus (Mouse).